The chain runs to 644 residues: Exoribonuclease 2 (644 aa).

An RNB domain is found at 189 to 516; that stretch reads REDLTALDFV…NHRLLKAVIK (328 aa). The S1 motif domain occupies 561 to 643; the sequence is DTRFAAEIVD…ETRSIIARPV (83 aa).

It belongs to the RNR ribonuclease family. RNase II subfamily.

The protein localises to the cytoplasm. It catalyses the reaction Exonucleolytic cleavage in the 3'- to 5'-direction to yield nucleoside 5'-phosphates.. Involved in mRNA degradation. Hydrolyzes single-stranded polyribonucleotides processively in the 3' to 5' direction. The polypeptide is Exoribonuclease 2 (Escherichia coli (strain UTI89 / UPEC)).